A 363-amino-acid polypeptide reads, in one-letter code: Flagellar P-ring protein (363 aa).

The first 20 residues, 1 to 20 (MKKFTLLLLCFVLPMTSAYA), serve as a signal peptide directing secretion.

Belongs to the FlgI family. As to quaternary structure, the basal body constitutes a major portion of the flagellar organelle and consists of four rings (L,P,S, and M) mounted on a central rod.

The protein localises to the periplasm. It localises to the bacterial flagellum basal body. Its function is as follows. Assembles around the rod to form the L-ring and probably protects the motor/basal body from shearing forces during rotation. The protein is Flagellar P-ring protein of Vibrio vulnificus (strain YJ016).